The chain runs to 1752 residues: Serine protease/ABC transporter B family protein tagA (1752 aa).

Positions 1-24 (MNKKLFIFGLSLFLFLFIFNLSLS) are cleaved as a signal peptide. Asn20 carries an N-linked (GlcNAc...) asparagine glycan. Residues 280-696 (HYSIQSGSAS…FGNIQLSKLI (417 aa)) form the Peptidase S8 domain. Residues Asp312 and His352 each act as charge relay system in the active site. N-linked (GlcNAc...) asparagine glycosylation is found at Asn400 and Asn557. Residue Ser625 is the Charge relay system of the active site. Residues Asn653, Asn785, and Asn823 are each glycosylated (N-linked (GlcNAc...) asparagine). A helical membrane pass occupies residues 909–929 (IVLLGIFGIIIVGAVIFVLVC). The tract at residues 946–1032 (DKGGDGNSIR…QNNSPQYDED (87 aa)) is disordered. Over residues 962-994 (NNNNNNNNNNNNNNNNNNNNNNNNNNNNNNNNN) the composition is skewed to low complexity. Asn993 carries N-linked (GlcNAc...) asparagine glycosylation. Positions 995 to 1004 (SNGKQSNIEL) are enriched in polar residues. Over residues 1013–1028 (GTPNGDDQQQQNNSPQ) the composition is skewed to low complexity. The next 6 helical transmembrane spans lie at 1058-1078 (ILGL…AVPL), 1102-1122 (FALI…LLAL), 1174-1194 (IPHM…LFII), 1200-1220 (LVVL…GGYI), 1285-1305 (TSGI…SSLV), and 1315-1335 (LIAF…VASL). An ABC transmembrane type-1 domain is found at 1059–1341 (LGLALFLSFI…VASLYTTYKS (283 aa)). The region spanning 1374 to 1610 (IQFNKVSFAY…KGMFYDFVQI (237 aa)) is the ABC transporter domain. 1409 to 1416 (GPSGGGKS) contributes to the ATP binding site. A disordered region spans residues 1621–1686 (IQLPSNSRNT…SRSPPPMWRQ (66 aa)). Residues 1631–1642 (RNADKLRNRSET) are compositionally biased toward basic and acidic residues. Asn1638, Asn1670, and Asn1694 each carry an N-linked (GlcNAc...) asparagine glycan.

It in the C-terminal section; belongs to the ABC transporter superfamily. ABCB family. Multidrug resistance exporter (TC 3.A.1.201) subfamily. In the N-terminal section; belongs to the peptidase S8 family.

The protein localises to the membrane. Its function is as follows. Required for a general cell fate determination at the onset of development. Required for the specification of an initial population of prespore cells in which tagA is expressed. Required for normal SDF-2 signaling during spore encapsulation. In Dictyostelium discoideum (Social amoeba), this protein is Serine protease/ABC transporter B family protein tagA (tagA).